The following is a 197-amino-acid chain: Endothelial cell-specific chemotaxis regulator (197 aa).

The N-terminal stretch at 1 to 23 (MGSVRETQLRWAILGFLLLQAAS) is a signal peptide. Residues 24–113 (ETPSQFSTEA…PSPTSETVLT (90 aa)) lie on the Extracellular side of the membrane. The disordered stretch occupies residues 40–107 (TVADHLPSSP…ADSTVPPSPT (68 aa)). Polar residues predominate over residues 50–63 (GPTWSQSQKHTSGL). The segment covering 64 to 82 (SADVPSSGRSSDSMSGDTS) has biased composition (low complexity). Over residues 83–107 (HNVTSTSPNMSFRTTADSTVPPSPT) the composition is skewed to polar residues. A helical transmembrane segment spans residues 114 to 134 (VAAFGVISFIAILVVVVIVLV). The Cytoplasmic segment spans residues 135–197 (SVVSLRFKCR…KGCPSAEKVL (63 aa)). Disordered regions lie at residues 146 to 172 (NKES…GEKE) and 178 to 197 (SMKN…EKVL). Composition is skewed to polar residues over residues 155–168 (PGSS…STAN) and 178–189 (SMKNINMNNSKG). S187 bears the Phosphoserine mark.

It belongs to the ECSCR family. Interacts with FLNA. Interacts with the 20S proteasome subunit PSMA7. In terms of processing, may be heavily O-glycosylated.

Its subcellular location is the cell membrane. The protein localises to the cytoplasm. Regulates endothelial chemotaxis and tube formation. Has a role in angiogenesis and apoptosis via modulation of the actin cytoskeleton and facilitation of proteasomal degradation of the apoptosis inhibitors BIRC3/IAP1 and BIRC2/IAP2. The sequence is that of Endothelial cell-specific chemotaxis regulator (ECSCR) from Bos taurus (Bovine).